A 609-amino-acid polypeptide reads, in one-letter code: UvrABC system protein C (609 aa).

One can recognise a GIY-YIG domain in the interval 19-97 (ASPGCYLWKS…IKKHNPRFNV (79 aa)). One can recognise a UVR domain in the interval 208-243 (ESLVSDLNIKMSNASERLDFEKAARYRDMLQRIQNF).

It belongs to the UvrC family. Interacts with UvrB in an incision complex.

It localises to the cytoplasm. Functionally, the UvrABC repair system catalyzes the recognition and processing of DNA lesions. UvrC both incises the 5' and 3' sides of the lesion. The N-terminal half is responsible for the 3' incision and the C-terminal half is responsible for the 5' incision. The chain is UvrABC system protein C from Leptospira interrogans serogroup Icterohaemorrhagiae serovar copenhageni (strain Fiocruz L1-130).